The chain runs to 410 residues: MECNLGTEHHSTDTWNRSKTEQAVVDAFDESLFGDVASDIGSETSLYSHAVKTAPSPPWVASPKILYQQLIRDLDFSEGPRLLSCLETWNEDLFSCFPINEDLYSDMMVLSPDPDDVISTVSTKDHVEMFNLTTRGSVRLPSPPKQPTGLPAYVQEVQDSFTVELRAREEAYTKLLVTYCKSIIRYLQGTAKRTTIGLNIQNPDQKAYTQLRQSILLRYYREVASLARLLYLHLYLTVTREFSWRLYASQSAHPDVFAALKFTWTERRQFTCAFHPVLCNHGIVLLEGKPLTASALREINYRRRELGLPLVRCGLVEENKSPLVQQPSFSVHLPRSVGFLTHHIKRKLDAYAVKHPQEPRHVRADHPYAKVVENRNYGSSIEAMILAPPSPSEILPGDPPRPPTCGFLTR.

A disordered region spans residues 388–410 (PPSPSEILPGDPPRPPTCGFLTR).

The protein belongs to the herpesviridae tegument protein VP16 protein family. As to quaternary structure, associates with the VP16-induced complex; binding to host HCFC1 activates VP16 for association with the octamer motif-binding host protein POU2F1, to form a multiprotein-DNA complex responsible for activating transcription of the viral immediate early genes.

It localises to the virion tegument. It is found in the host nucleus. In terms of biological role, transcriptional activator of immediate-early (IE) gene products (alpha genes). Acts as a key activator of lytic infection by initiating the lytic program through the assembly of the transcriptional regulatory VP16-induced complex composed of VP16 and two cellular factors, HCFC1 and POU2F 1. VP16-induced complex represents a regulatory switch: when it is on, it promotes IE-gene expression and thus lytic infection, and when it is off, it limits IE-gene transcription favoring latent infection. Its function is as follows. May play a role in the aggregation of tegument proteins around nucleocapsids during virus morphogenesis. This is Tegument protein VP16 homolog from Varicella-zoster virus (strain Oka vaccine) (HHV-3).